We begin with the raw amino-acid sequence, 389 residues long: Trans-2-enoyl-CoA reductase [NADH] (389 aa).

NAD(+) is bound by residues 47-52 (GASTGY), 73-74 (FE), 110-111 (DA), and 138-139 (LA). Tyr-224 provides a ligand contact to substrate. The Proton donor role is filled by Tyr-234. NAD(+)-binding positions include Lys-243 and 272–274 (LVT).

It belongs to the TER reductase family. Monomer.

It carries out the reaction a 2,3-saturated acyl-CoA + NAD(+) = a (2E)-enoyl-CoA + NADH + H(+). It functions in the pathway lipid metabolism; fatty acid biosynthesis. Involved in the fatty acid synthesis (FAS II). Catalyzes the reduction of a carbon-carbon double bond in an enoyl moiety that is covalently linked to a coenzyme A (CoA). In Clostridium perfringens (strain 13 / Type A), this protein is Trans-2-enoyl-CoA reductase [NADH].